We begin with the raw amino-acid sequence, 911 residues long: Band 3 anion transport protein (911 aa).

At Met1 the chain carries N-acetylmethionine. Positions 1–26 (MEELQDDYEDMMEENLEQEEYEDPDI) are enriched in acidic residues. The tract at residues 1 to 40 (MEELQDDYEDMMEENLEQEEYEDPDIPESQMEEPAAHDTE) is disordered. The Cytoplasmic segment spans residues 1–403 (MEELQDDYED…LSDITDAFSP (403 aa)). A phosphotyrosine mark is found at Tyr8, Tyr21, and Tyr46. Residues 13–31 (EENLEQEEYEDPDIPESQM) form a (Microbial infection) Interaction with P.falciparum (isolate K1) FBPA region. Residues 55-290 (HKVYVELQEL…LGRAAATLMS (236 aa)) are globular. An interaction with ANK1 region spans residues 176 to 185 (AVLTRSGDPS). Residues Ser185 and Ser350 each carry the phosphoserine modification. A dimerization arm region spans residues 304-357 (RGELLHSLEGFLDCSLVLPPTDAPSEQALLSLVPVQRELLRRRYQSSPAKPDSS). Phosphotyrosine is present on Tyr359. A helical membrane pass occupies residues 404-427 (QVLAAVIFIYFAALSPAITFGGLL). At 428-435 (GEKTRNQM) the chain is on the extracellular side. A helical transmembrane segment spans residues 436–456 (GVSELLISTAVQGILFALLGA). The Cytoplasmic portion of the chain corresponds to 457-459 (QPL). A discontinuously helical membrane pass occupies residues 460–476 (LVVGFSGPLLVFEEAFF). Residues 477-485 (SFCETNGLE) lie on the Extracellular side of the membrane. Residues 486–506 (YIVGRVWIGFWLILLVVLVVA) form a helical membrane-spanning segment. At 507 to 518 (FEGSFLVRFISR) the chain is on the cytoplasmic side. Residues 519-541 (YTQEIFSFLISLIFIYETFSKLI) traverse the membrane as a helical segment. Residues 542–570 (KIFQDHPLQKTYNYNVLMVPKPQGPLPNT) lie on the Extracellular side of the membrane. The segment at 559 to 630 (MVPKPQGPLP…DFFIQDTYTQ (72 aa)) is involved in anion transport. Residues 571–591 (ALLSLVLMAGTFFFAMMLRKF) traverse the membrane as a helical segment. Topologically, residues 592-602 (KNSSYFPGKLR) are cytoplasmic. A helical transmembrane segment spans residues 603–623 (RVIGDFGVPISILIMVLVDFF). The Extracellular segment spans residues 624–663 (IQDTYTQKLSVPDGFKVSNSSARGWVIHPLGLRSEFPIWM). The N-linked (GlcNAc...) (complex) asparagine glycan is linked to Asn642. The chain crosses the membrane as a helical span at residues 664–684 (MFASALPALLVFILIFLESQI). Topologically, residues 685–700 (TTLIVSKPERKMVKGS) are cytoplasmic. A helical transmembrane segment spans residues 701–719 (GFHLDLLLVVGMGGVAALF). Residues 720 to 737 (GMPWLSATTVRSVTHANA) form a discontinuously helical membrane-spanning segment. The segment at 720-761 (GMPWLSATTVRSVTHANALTVMGKASTPGAAAQIQEVKEQRI) is (Microbial infection) 5ABC region; interaction with P.falciparum (isolate 3D7) MSP9. Topologically, residues 738–760 (LTVMGKASTPGAAAQIQEVKEQR) are cytoplasmic. Helical transmembrane passes span 761–781 (ISGL…PILS) and 782–800 (RIPL…VTSL). At 801–838 (SGIQLFDRILLLFKPPKYHPDVPYVKRVKTWRMHLFTG) the chain is on the cytoplasmic side. The discontinuously helical intramembrane region spans 839 to 869 (IQIICLAVLWVVKSTPASLALPFVLILTVPL). Cys843 is lipidated: S-palmitoyl cysteine. At 870-911 (RRVLLPLIFRNVELQCLDADDAKATFDEEEGRDEYDEVAMPV) the chain is on the cytoplasmic side. Tyr904 is subject to Phosphotyrosine.

It belongs to the anion exchanger (TC 2.A.31) family. In terms of assembly, a dimer in solution, but in its membrane environment, it exists primarily as a mixture of dimers and tetramers and spans the membrane asymmetrically. Component of the ankyrin-1 complex in the erythrocyte, composed of ANK1, RHCE, RHAG, SLC4A1, EPB42, GYPA, GYPB and AQP1. Interacts with STOM; this interaction positively regulates SLC4A1 activity. Interacts with GYPA; a GYPA monomer is bound at each end of the SLC4A1 dimer forming a heterotetramer. Three SLC4A1 dimers (Band 3-I, Band 3-II and Band 3-III) participates in the ankyrin-1 complex. Interacts (via the cytoplasmic domain) with EPB42; this interaction is mediated by the SLC4A1 Band 3-I dimer. Interacts (via the cytoplasmic domain) directly with ANK1; this interaction is mediated by the SLC4A1 Band 3-II and Band 3-III dimers. As to quaternary structure, interacts with TMEM139. (Microbial infection) Interacts (via N-terminus) with P.falciparum (isolate K1) aldolase FBPA; the interaction inhibits FBPA catalytic activity. In terms of assembly, (Microbial infection) Interacts (via the 5ABC region) with P.falciparum (isolate 3D7) MSP9/ABRA (via N-terminus). As to quaternary structure, (Microbial infection) Interacts (via the 5ABC region) with P.falciparum (isolate 3D7) MSP1 p42 subunit. Phosphorylated on Tyr-8 and Tyr-21 most likely by SYK. PP1-resistant phosphorylation that precedes Tyr-359 and Tyr-904 phosphorylation. In terms of processing, phosphorylated on Tyr-359 and Tyr-904 most likely by LYN. PP1-inhibited phosphorylation that follows Tyr-8 and Tyr-21 phosphorylation. Post-translationally, N-glycosylated. As to expression, detected in erythrocytes (at protein level). Expressed in kidney (at protein level).

Its subcellular location is the cell membrane. It localises to the basolateral cell membrane. The catalysed reaction is hydrogencarbonate(in) + chloride(out) = hydrogencarbonate(out) + chloride(in). With respect to regulation, phenyl isothiocyanate inhibits anion transport in vitro. Functions both as a transporter that mediates electroneutral anion exchange across the cell membrane and as a structural protein. Component of the ankyrin-1 complex of the erythrocyte membrane; required for normal flexibility and stability of the erythrocyte membrane and for normal erythrocyte shape via the interactions of its cytoplasmic domain with cytoskeletal proteins, glycolytic enzymes, and hemoglobin. Functions as a transporter that mediates the 1:1 exchange of inorganic anions across the erythrocyte membrane. Mediates chloride-bicarbonate exchange in the kidney, and is required for normal acidification of the urine. Functionally, (Microbial infection) Acts as a receptor for P.falciparum (isolate 3D7) MSP9 and thus, facilitates merozoite invasion of erythrocytes. Acts as a receptor for P.falciparum (isolate 3D7) MSP1 and thus, facilitates merozoite invasion of erythrocytes. In Homo sapiens (Human), this protein is Band 3 anion transport protein.